The chain runs to 488 residues: Fumarate hydratase (488 aa).

(S)-malate-binding residues include Ser-105, Ser-147, Asn-148, Thr-194, and His-195. The active-site Proton donor/acceptor is the His-195. Ser-340 is a catalytic residue. Positions 341, 346, and 348 each coordinate (S)-malate.

Belongs to the class-II fumarase/aspartase family. Fumarase subfamily. As to quaternary structure, homotetramer.

The protein localises to the cytoplasm. It localises to the cytosol. It catalyses the reaction (S)-malate = fumarate + H2O. In terms of biological role, catalyzes the reversible stereospecific interconversion of fumarate to L-malate. Fumarate metabolism in the cytosol plays a role during urea cycle and arginine metabolism; fumarate being a by-product of the urea cycle and amino-acid catabolism. In Schistosoma mansoni (Blood fluke), this protein is Fumarate hydratase.